A 354-amino-acid polypeptide reads, in one-letter code: S-adenosylmethionine:tRNA ribosyltransferase-isomerase (354 aa).

It belongs to the QueA family. Monomer.

The protein resides in the cytoplasm. It catalyses the reaction 7-aminomethyl-7-carbaguanosine(34) in tRNA + S-adenosyl-L-methionine = epoxyqueuosine(34) in tRNA + adenine + L-methionine + 2 H(+). Its pathway is tRNA modification; tRNA-queuosine biosynthesis. Functionally, transfers and isomerizes the ribose moiety from AdoMet to the 7-aminomethyl group of 7-deazaguanine (preQ1-tRNA) to give epoxyqueuosine (oQ-tRNA). This is S-adenosylmethionine:tRNA ribosyltransferase-isomerase from Salmonella paratyphi A (strain ATCC 9150 / SARB42).